A 483-amino-acid polypeptide reads, in one-letter code: Aspartyl/glutamyl-tRNA(Asn/Gln) amidotransferase subunit B (483 aa).

Belongs to the GatB/GatE family. GatB subfamily. In terms of assembly, heterotrimer of A, B and C subunits.

It catalyses the reaction L-glutamyl-tRNA(Gln) + L-glutamine + ATP + H2O = L-glutaminyl-tRNA(Gln) + L-glutamate + ADP + phosphate + H(+). The enzyme catalyses L-aspartyl-tRNA(Asn) + L-glutamine + ATP + H2O = L-asparaginyl-tRNA(Asn) + L-glutamate + ADP + phosphate + 2 H(+). Its function is as follows. Allows the formation of correctly charged Asn-tRNA(Asn) or Gln-tRNA(Gln) through the transamidation of misacylated Asp-tRNA(Asn) or Glu-tRNA(Gln) in organisms which lack either or both of asparaginyl-tRNA or glutaminyl-tRNA synthetases. The reaction takes place in the presence of glutamine and ATP through an activated phospho-Asp-tRNA(Asn) or phospho-Glu-tRNA(Gln). The sequence is that of Aspartyl/glutamyl-tRNA(Asn/Gln) amidotransferase subunit B from Rickettsia typhi (strain ATCC VR-144 / Wilmington).